A 109-amino-acid polypeptide reads, in one-letter code: Meiotically up-regulated gene 153 protein (109 aa).

It localises to the mitochondrion. Its function is as follows. Has a role in meiosis. This Schizosaccharomyces pombe (strain 972 / ATCC 24843) (Fission yeast) protein is Meiotically up-regulated gene 153 protein (mug153).